The following is a 365-amino-acid chain: tRNA/tmRNA (uracil-C(5))-methyltransferase (365 aa).

Residues glutamine 189, tyrosine 217, asparagine 222, glutamate 238, and aspartate 298 each coordinate S-adenosyl-L-methionine. The active-site Nucleophile is cysteine 323. The Proton acceptor role is filled by glutamate 357.

This sequence belongs to the class I-like SAM-binding methyltransferase superfamily. RNA M5U methyltransferase family. TrmA subfamily.

It catalyses the reaction uridine(54) in tRNA + S-adenosyl-L-methionine = 5-methyluridine(54) in tRNA + S-adenosyl-L-homocysteine + H(+). The enzyme catalyses uridine(341) in tmRNA + S-adenosyl-L-methionine = 5-methyluridine(341) in tmRNA + S-adenosyl-L-homocysteine + H(+). Functionally, dual-specificity methyltransferase that catalyzes the formation of 5-methyluridine at position 54 (m5U54) in all tRNAs, and that of position 341 (m5U341) in tmRNA (transfer-mRNA). This is tRNA/tmRNA (uracil-C(5))-methyltransferase from Pseudoalteromonas atlantica (strain T6c / ATCC BAA-1087).